The chain runs to 1604 residues: MVDAGGRSAAEGWRRMEAPPEGADLVPLDRYDAARAKIAANLQWICAKAYGLDNIPEDLRDPFYIDQYEQEHIKPPVIKLLLSSELYCRVCSLILKGDQAATLQGHQSVIQALSRKGIYVMESDDTPVTDADLSQAPIKMSGHMAMVDALMMAYTVEMISIEKVVASVKRFSTFSASKELPYDLEDAMVFWINKVNLKMREITEKEVKLKQQPLESPAHQKPGLEHAVMHCMLEPVDFARVVRYRREHLSARQSPYFPLLEDLMRDGSDGAALLAVVHYYCPEQMKLDDICLKEVPSMADSLYNIRLLREFSNEHLNKCFYLTLEDMLYAPLVLKPNVMVFIAELFWWFENVKPDFVQPRDIQELKDAKTVLQQKSSRPPVPISNATKRSFLGSPAAMSPADLPPSTQPLTEGSHRYHLHSEEPECLGKGASTFSPSHPLLPLRQKQQKVSQAEEIPDQRHRSNSLTRADGQPRGAAIAWPDKKNRPVSQPTSFALHHAASCDVDPSSGDSISLARSISKDSLASNIIHLTPQNQPHPSAGKTNGKSLLSNVNIEDDEEEELVAIIRTDVSPHSPEIPRTSPQAPGLVASIRSPQRQADTLESKPDSFYLEPLMPAVLRPAKEKQIITKEDERGEGRPRTIMAKRPSEGSQPLVRKKVTGSHGSRDLNRTFTPIPCSEFAASIDPTEVGPQSTEATGEGQPLALGRFDPVPQGQVADGFFLHVGRAEEDEGRWYVGSQSPSSHDSEPWTILRQDSDSDVVDVEDAEQDFIGEDHPVVIPRYAGEEESAKLQEDMKVKEHEDKDDASGRSSPCLSTTSQLSSMSMASGSVKMTSFAERKLQRLNSCETKSSTSSSQKTTPDASESCPAPLTTWRQKREQSPSRHSKDPASLLASELVQLHMQLEEKRRAIEAQKKKMEALSARQRLKLGKAAFLHVVKKGKADGAPQPLRPEHFTKEFTQHNGEDLDDGTCKTEGFLVKEEQRDLSDSQDVAFVQLHKPRDPATLHDGEKHRVISAALLEDSVGEVDVNECDLSIEKLNETISTLQQAILKISQQQEQLLMKSPTVPTSGTKNNCQDQKVKAPVHFVEPLSPTGVPGHRKPPRLGQGRNSRSGRPAELKVPKDRQQGCSRSKTPTPSVETLPHSRSLPPSTHPRSPLDPGGELPEKCLFDSYRLHDESNHRTFGLSSCKDANIVSEQMNFKEGLDTSVQEAELSSSAITGKEHTPMEEPLRSKASLIEVDLSDLKAPDEDGEVVGHESSLELGGESDQKPGVGFFFKDEQKAEDELAKKRAAFLLKQQRKAEEARARKQQLEAEVELKRDEARRKAEEDRLRKEEEKARRELIKQEYLRRKQQQALEEQGLGKPKSKPKKPRPKSVHREESCSDSGTKCSSTPDNLSQTHSGSSLSLASAATTEPESVHSGGTPSHRVESLEALPILSRNPSRSTDRDWETASAASSLASVAEYTGPKLFKEPSSKSNKPIIHNAISHCCLAGKVNEPHKNSILEELEKCDANHYIILFRDAGCQFRALYCYQPDTEEIYKLTGTGPKSITKKMIDKLYKYSSDRKQFNLIPAKTMSVSVDALTIHNHLWQPKRPTVPKKTQTRK.

Ser-216 is modified (phosphoserine). A Calponin-homology (CH) domain is found at 235–350 (PVDFARVVRY…FIAELFWWFE (116 aa)). Ser-390, Ser-394, and Ser-435 each carry phosphoserine. Positions 394 to 413 (SPAAMSPADLPPSTQPLTEG) are disordered. The segment at 444-491 (RQKQQKVSQAEEIPDQRHRSNSLTRADGQPRGAAIAWPDKKNRPVSQP) is disordered. Thr-531 is modified (phosphothreonine). Phosphoserine is present on residues Ser-571, Ser-574, Ser-581, Ser-593, Ser-607, Ser-647, Ser-739, Ser-745, Ser-755, and Ser-757. The tract at residues 642–671 (MAKRPSEGSQPLVRKKVTGSHGSRDLNRTF) is disordered. A compositionally biased stretch (basic and acidic residues) spans 784–806 (EEESAKLQEDMKVKEHEDKDDAS). Disordered regions lie at residues 784–824 (EEES…SMSM) and 842–888 (LNSC…KDPA). Composition is skewed to low complexity over residues 813–824 (LSTTSQLSSMSM) and 847–858 (TKSSTSSSQKTT). A compositionally biased stretch (basic and acidic residues) spans 874–886 (QKREQSPSRHSKD). Positions 888–909 (ASLLASELVQLHMQLEEKRRAI) are sufficient for interaction with SPTBN1. Coiled-coil stretches lie at residues 890–926 (LLAS…QRLK) and 1026–1058 (DVNE…QEQL). The segment at 920–939 (SARQRLKLGKAAFLHVVKKG) is sufficient for interaction with calmodulin. Disordered regions lie at residues 1085-1163 (FVEP…GELP), 1246-1271 (PDED…KPGV), and 1298-1448 (RKAE…DRDW). Residue Ser-1090 is modified to Phosphoserine. Residues 1113–1124 (RPAELKVPKDRQ) are compositionally biased toward basic and acidic residues. The span at 1125 to 1137 (QGCSRSKTPTPSV) shows a compositional bias: polar residues. Ser-1154 carries the phosphoserine modification. 2 stretches are compositionally biased toward basic and acidic residues: residues 1246-1258 (PDED…HESS) and 1298-1348 (RKAE…EYLR). Residues 1286-1357 (AKKRAAFLLK…RRKQQQALEE (72 aa)) adopt a coiled-coil conformation. Residues 1363-1374 (PKSKPKKPRPKS) are compositionally biased toward basic residues. The span at 1382–1394 (SDSGTKCSSTPDN) shows a compositional bias: polar residues. Positions 1395 to 1412 (LSQTHSGSSLSLASAATT) are enriched in low complexity. 2 positions are modified to phosphoserine: Ser-1400 and Ser-1429. The CKK domain occupies 1465 to 1599 (GPKLFKEPSS…QPKRPTVPKK (135 aa)). The residue at position 1539 (Tyr-1539) is a Phosphotyrosine.

The protein belongs to the CAMSAP1 family. As to quaternary structure, interacts with spectrin via SPTBN1; the interaction is direct. Interacts with calmodulin; calcium-dependent it prevents interaction with spectrin. As to expression, in brain, specifically expressed in astrocytes (at protein level).

It is found in the cytoplasm. The protein localises to the cytoskeleton. Its function is as follows. Key microtubule-organizing protein that specifically binds the minus-end of non-centrosomal microtubules and regulates their dynamics and organization. Specifically recognizes growing microtubule minus-ends and stabilizes microtubules. Acts on free microtubule minus-ends that are not capped by microtubule-nucleating proteins or other factors and protects microtubule minus-ends from depolymerization. In contrast to CAMSAP2 and CAMSAP3, tracks along the growing tips of minus-end microtubules without significantly affecting the polymerization rate: binds at the very tip of the microtubules minus-end and acts as a minus-end tracking protein (-TIP) that dissociates from microtubules after allowing tubulin incorporation. Through interaction with spectrin may regulate neurite outgrowth. The protein is Calmodulin-regulated spectrin-associated protein 1 (Camsap1) of Rattus norvegicus (Rat).